We begin with the raw amino-acid sequence, 495 residues long: Glycerol kinase (495 aa).

Residue Thr11 participates in ADP binding. Positions 11, 12, and 13 each coordinate ATP. A sn-glycerol 3-phosphate-binding site is contributed by Thr11. Arg15 is an ADP binding site. Sn-glycerol 3-phosphate contacts are provided by Arg81, Glu82, Tyr133, and Asp242. Residues Arg81, Glu82, Tyr133, Asp242, and Gln243 each contribute to the glycerol site. 2 residues coordinate ADP: Thr264 and Gly307. ATP-binding residues include Thr264, Gly307, Gln311, and Gly408. The ADP site is built by Gly408 and Asn412.

It belongs to the FGGY kinase family.

The enzyme catalyses glycerol + ATP = sn-glycerol 3-phosphate + ADP + H(+). Its pathway is polyol metabolism; glycerol degradation via glycerol kinase pathway; sn-glycerol 3-phosphate from glycerol: step 1/1. With respect to regulation, inhibited by fructose 1,6-bisphosphate (FBP). Functionally, key enzyme in the regulation of glycerol uptake and metabolism. Catalyzes the phosphorylation of glycerol to yield sn-glycerol 3-phosphate. The polypeptide is Glycerol kinase (Acinetobacter baylyi (strain ATCC 33305 / BD413 / ADP1)).